Consider the following 220-residue polypeptide: Fructose-6-phosphate aldolase (220 aa).

Lysine 85 functions as the Schiff-base intermediate with substrate in the catalytic mechanism.

Belongs to the transaldolase family. Type 3A subfamily. As to quaternary structure, homodecamer.

It localises to the cytoplasm. It carries out the reaction beta-D-fructose 6-phosphate = dihydroxyacetone + D-glyceraldehyde 3-phosphate. In terms of biological role, catalyzes the reversible formation of fructose 6-phosphate from dihydroxyacetone and D-glyceraldehyde 3-phosphate via an aldolization reaction. This is Fructose-6-phosphate aldolase from Enterobacter sp. (strain 638).